The chain runs to 87 residues: Large ribosomal subunit protein bL27 (87 aa).

Belongs to the bacterial ribosomal protein bL27 family.

The sequence is that of Large ribosomal subunit protein bL27 from Stenotrophomonas maltophilia (strain K279a).